The sequence spans 401 residues: Alpha-(1,4)-fucosyltransferase (401 aa).

Over 1–4 (MPMR) the chain is Cytoplasmic. A helical; Signal-anchor for type II membrane protein membrane pass occupies residues 5–27 (YLNAMAALLMMFFTLLILSFTGI). The Lumenal portion of the chain corresponds to 28-401 (LEFPSASTSM…SRRGGKNAGV (374 aa)). Asn85 is a glycosylation site (N-linked (GlcNAc...) asparagine).

Belongs to the glycosyltransferase 10 family. In terms of tissue distribution, present in root, stem, flower buds and green siliques.

It is found in the golgi apparatus. Its subcellular location is the golgi stack membrane. The protein operates within protein modification; protein glycosylation. Functionally, may be involved in cell wall synthesis. Catalyzes alpha-1,4 glycosidic linkages and generates Lewis-a epitopes. The protein is Alpha-(1,4)-fucosyltransferase (FUT13) of Arabidopsis thaliana (Mouse-ear cress).